We begin with the raw amino-acid sequence, 323 residues long: MSALPPAIFLMGPTAAGKTDLAIELTKVLPCELISVDSALVYRDMDIGTAKPSKALLAQYPHKLIDIIDPAESYSAADFRTDALAAMAEITARGNIPLLVGGTMLYYKALQEGLADMPAADAQVRAELEEEAARLGWQALHDQLAAIDPVSAARIHPNDPQRLSRALEVWRVSGQTMTEHRLKQSAQSADAGASGQSQLPYTVANLAIAPANRQVLHERIAQRFTIMLEQGFVDEVVALRSRGDLHPGLPSIRAVGYRQVWDHLDGKLTSAEMQERGIIATRQLAKRQFTWLRSWSDLHWLDSLDSDNLSRALKYLGTVSILS.

Residue 12 to 19 (GPTAAGKT) coordinates ATP. 14-19 (TAAGKT) provides a ligand contact to substrate. 2 interaction with substrate tRNA regions span residues 37 to 40 (DSAL) and 161 to 165 (QRLSR).

It belongs to the IPP transferase family. In terms of assembly, monomer. Mg(2+) serves as cofactor.

It catalyses the reaction adenosine(37) in tRNA + dimethylallyl diphosphate = N(6)-dimethylallyladenosine(37) in tRNA + diphosphate. Functionally, catalyzes the transfer of a dimethylallyl group onto the adenine at position 37 in tRNAs that read codons beginning with uridine, leading to the formation of N6-(dimethylallyl)adenosine (i(6)A). The protein is tRNA dimethylallyltransferase of Pseudomonas fluorescens (strain SBW25).